Reading from the N-terminus, the 136-residue chain is Flagellar basal-body rod protein FlgC (136 aa).

The protein belongs to the flagella basal body rod proteins family. In terms of assembly, the basal body constitutes a major portion of the flagellar organelle and consists of four rings (L,P,S, and M) mounted on a central rod. The rod consists of about 26 subunits of FlgG in the distal portion, and FlgB, FlgC and FlgF are thought to build up the proximal portion of the rod with about 6 subunits each.

Its subcellular location is the bacterial flagellum basal body. In Buchnera aphidicola subsp. Schizaphis graminum (strain Sg), this protein is Flagellar basal-body rod protein FlgC (flgC).